The chain runs to 59 residues: UPF0181 protein YoaH (59 aa).

This sequence belongs to the UPF0181 family.

This Shigella flexneri serotype 5b (strain 8401) protein is UPF0181 protein YoaH.